A 154-amino-acid polypeptide reads, in one-letter code: CASP-like protein 5B2 (154 aa).

Residues 1–10 (MKKLLGGPGT) lie on the Cytoplasmic side of the membrane. A helical transmembrane segment spans residues 11 to 31 (VCGLLLRIGQCASAAASIGVM). The Extracellular portion of the chain corresponds to 32–42 (VSAKEFSVHTA). A helical transmembrane segment spans residues 43–63 (FCYLIASMGLQLLWSFGLACL). Over 64–77 (DVYALRGKKDLQNP) the chain is Cytoplasmic. A helical membrane pass occupies residues 78-98 (ILVSLFVVGDWVTAMLSLAAA). The Extracellular segment spans residues 99-129 (CSSAGVVVLYEKDIKYCNTQSQYPCLRYEVA). A helical membrane pass occupies residues 130 to 150 (VALSFVTWIQIAVSSHVTFWI). The Cytoplasmic portion of the chain corresponds to 151–154 (LASV).

It belongs to the Casparian strip membrane proteins (CASP) family. In terms of assembly, homodimer and heterodimers. In terms of tissue distribution, expressed in the stele of the root.

It localises to the cell membrane. The chain is CASP-like protein 5B2 from Arabidopsis thaliana (Mouse-ear cress).